A 659-amino-acid chain; its full sequence is Putative RING finger protein R311 (659 aa).

The RING-type zinc finger occupies 502-540; that stretch reads CPVCYDDDYIKTKLICGHTVCLTCVLNILPNSKGCPLCM.

This Acanthamoeba polyphaga (Amoeba) protein is Putative RING finger protein R311.